A 317-amino-acid chain; its full sequence is MRAKLLGIVLTTPIAISSFASTETLSFTPDNINADISLGTLSGKTKERVYLAEEGGRKVSQLDWKFNNAAIIKGAINWDLMPQISIGAAGWTTLGSRGGNMVDQDWMDSSNPGTWTDESRHPDTQLNYANEFDLNIKGWLLNEPNYRLGLMAGYQESRYSFTARGGSYIYSSEEGFRDDIGSFPNGERAIGYKQRFKMPYIGLTGSYRYEDFELGGTFKYSGWVESSDNDEHYDPGKRITYRSKVKDQNYYSVAVNAGYYVTPNAKVYVEGAWNRVTNKKGNTSLYDHNNNTSDYSKNGAGIENYNFITTAGLKYTF.

The N-terminal stretch at Met-1–Ala-20 is a signal peptide. Residues Ser-21–Asn-31 lie on the Periplasmic side of the membrane. Residues Ile-32–Leu-41 traverse the membrane as a beta stranded segment. Topologically, residues Ser-42–Ala-69 are extracellular. Residues Ala-70–Trp-78 traverse the membrane as a beta stranded segment. The Periplasmic portion of the chain corresponds to Asp-79–Gln-83. The chain crosses the membrane as a beta stranded span at residues Ile-84 to Thr-92. Residues Thr-93–Asn-130 are Extracellular-facing. Residues Asp-103 and Asp-105 contribute to the active site. A beta stranded transmembrane segment spans residues Glu-131–Leu-140. Topologically, residues Leu-141 to Asn-145 are periplasmic. The chain crosses the membrane as a beta stranded span at residues Tyr-146 to Glu-156. Residues Ser-157 to Lys-197 lie on the Extracellular side of the membrane. A beta stranded membrane pass occupies residues Met-198–Tyr-209. Over Glu-210–Asp-211 the chain is Periplasmic. A beta stranded transmembrane segment spans residues Phe-212–Ser-221. At Gly-222–Tyr-250 the chain is on the extracellular side. Catalysis depends on residues Asp-230 and His-232. A beta stranded membrane pass occupies residues Tyr-251 to Val-261. Residues Thr-262–Asn-264 lie on the Periplasmic side of the membrane. Residues Ala-265–Asn-274 traverse the membrane as a beta stranded segment. Over Arg-275–Asn-306 the chain is Extracellular. Residues Phe-307–Thr-316 traverse the membrane as a beta stranded segment. Phe-317 is a topological domain (periplasmic).

The protein belongs to the peptidase A26 family. Homopentamer.

It is found in the cell outer membrane. The catalysed reaction is Has a virtual requirement for Arg in the P1 position and a slightly less stringent preference for this residue in the P1' position, which can also contain Lys, Gly or Val.. Inhibited by zinc. In terms of biological role, protease that can cleave T7 RNA polymerase, ferric enterobactin receptor protein (FEP), antimicrobial peptide protamine and other proteins. This protease has a specificity for paired basic residues. The protein is Protease 7 (ompT) of Escherichia coli (strain K12).